The following is a 551-amino-acid chain: Chaperonin GroEL (551 aa).

ATP-binding positions include Thr30 to Pro33, Lys51, Asp87 to Thr91, Gly415, and Asp496.

This sequence belongs to the chaperonin (HSP60) family. As to quaternary structure, forms a cylinder of 14 subunits composed of two heptameric rings stacked back-to-back. Interacts with the co-chaperonin GroES.

Its subcellular location is the cytoplasm. It carries out the reaction ATP + H2O + a folded polypeptide = ADP + phosphate + an unfolded polypeptide.. Together with its co-chaperonin GroES, plays an essential role in assisting protein folding. The GroEL-GroES system forms a nano-cage that allows encapsulation of the non-native substrate proteins and provides a physical environment optimized to promote and accelerate protein folding. In Maricaulis maris (strain MCS10) (Caulobacter maris), this protein is Chaperonin GroEL.